The sequence spans 295 residues: MSTNSRSNSRANFNNEIHDIGTAQNSSMPPTYYDRSLADIFPPHLLKKVVSEVVSTFLLVFVTCGAAGIYGSDKDRISQLGQSVAGGLIVTVMIYAVGHISGAHMNPAVTLAFAVFRHFPWIQVPFYWAAQFTGSICASFVLKAVLHPIAVLGTTTPTGPHWHSLVIEIIVTFNMMFVTLAVATDTRAVGELAGLAVGSAVCITSIFAGAVSGGSMNPARTLGPALASNLYTGLWIYFLGPVLGTLSGAWTYTYIRFEEAPSHKDMSQKLSSFKLRRLQSQSVAVDDDELDHIQV.

Helical transmembrane passes span 49–69 and 83–103; these read VVSEVVSTFLLVFVTCGAAGI and SVAGGLIVTVMIYAVGHISGA. The NPA 1 signature appears at 106–108; it reads NPA. The next 3 membrane-spanning stretches (helical) occupy residues 124–146, 164–184, and 192–212; these read VPFYWAAQFTGSICASFVLKAVL, SLVIEIIVTFNMMFVTLAVAT, and LAGLAVGSAVCITSIFAGAVS. An NPA 2 motif is present at residues 217 to 219; sequence NPA. Residues 230–250 form a helical membrane-spanning segment; it reads LYTGLWIYFLGPVLGTLSGAW.

It belongs to the MIP/aquaporin (TC 1.A.8) family. NIP (TC 1.A.8.12) subfamily.

The protein resides in the membrane. Functionally, aquaporins facilitate the transport of water and small neutral solutes across cell membranes. This is Aquaporin NIP2-1 (NIP2-1) from Zea mays (Maize).